A 205-amino-acid chain; its full sequence is Ribonuclease HII (205 aa).

The RNase H type-2 domain occupies 14–201; that stretch reads EIIAGVDEAG…KGNINHSAIL (188 aa). Positions 20, 21, and 111 each coordinate a divalent metal cation.

It belongs to the RNase HII family. The cofactor is Mn(2+). Mg(2+) is required as a cofactor.

It is found in the cytoplasm. It carries out the reaction Endonucleolytic cleavage to 5'-phosphomonoester.. Functionally, endonuclease that specifically degrades the RNA of RNA-DNA hybrids. In Orientia tsutsugamushi (strain Ikeda) (Rickettsia tsutsugamushi), this protein is Ribonuclease HII.